Here is a 257-residue protein sequence, read N- to C-terminus: Beta-fibrinogenase mucrofibrase-3 (257 aa).

The signal sequence occupies residues 1–18; that stretch reads MVLIRVLANLLILQLSYA. A propeptide spanning residues 19 to 24 is cleaved from the precursor; the sequence is QKSSEL. Residues 25–248 enclose the Peptidase S1 domain; the sequence is VIGGDECNIN…HLDWIKGIIA (224 aa). Disulfide bonds link cysteine 31-cysteine 162, cysteine 49-cysteine 65, cysteine 97-cysteine 255, cysteine 141-cysteine 209, cysteine 173-cysteine 188, and cysteine 199-cysteine 224. Active-site charge relay system residues include histidine 64 and aspartate 109. Serine 203 (charge relay system) is an active-site residue.

This sequence belongs to the peptidase S1 family. Snake venom subfamily. As to quaternary structure, monomer. In terms of tissue distribution, expressed by the venom gland.

It is found in the secreted. Functionally, snake venom serine protease with fibrinogenolytic activities. Cleaves beta-chain of fibrinogen (FGB) efficiently and shows relatively lower activity on alpha-chain. This is Beta-fibrinogenase mucrofibrase-3 from Protobothrops mucrosquamatus (Taiwan habu).